A 278-amino-acid polypeptide reads, in one-letter code: Indole-3-glycerol phosphate synthase (278 aa).

This sequence belongs to the TrpC family.

It catalyses the reaction 1-(2-carboxyphenylamino)-1-deoxy-D-ribulose 5-phosphate + H(+) = (1S,2R)-1-C-(indol-3-yl)glycerol 3-phosphate + CO2 + H2O. Its pathway is amino-acid biosynthesis; L-tryptophan biosynthesis; L-tryptophan from chorismate: step 4/5. In Pseudomonas aeruginosa (strain LESB58), this protein is Indole-3-glycerol phosphate synthase.